Reading from the N-terminus, the 282-residue chain is Ribosomal protein L11 methyltransferase (282 aa).

S-adenosyl-L-methionine is bound by residues threonine 133, glycine 154, aspartate 175, and asparagine 216.

This sequence belongs to the methyltransferase superfamily. PrmA family.

The protein localises to the cytoplasm. It catalyses the reaction L-lysyl-[protein] + 3 S-adenosyl-L-methionine = N(6),N(6),N(6)-trimethyl-L-lysyl-[protein] + 3 S-adenosyl-L-homocysteine + 3 H(+). Methylates ribosomal protein L11. The sequence is that of Ribosomal protein L11 methyltransferase from Campylobacter jejuni subsp. doylei (strain ATCC BAA-1458 / RM4099 / 269.97).